The sequence spans 165 residues: Cystatin-like protein (165 aa).

Residues 1–19 (MDVALKLLLLAALTLLASA) form the signal peptide. Disulfide bonds link cysteine 80–cysteine 92 and cysteine 104–cysteine 118.

Functionally, involved in hypoxia tolerance. This is Cystatin-like protein from Clarias batrachus (Walking catfish).